The primary structure comprises 208 residues: Small ribosomal subunit protein uS4 (208 aa).

Residues 98-159 (RRLDNVVYRL…KSRKIVSIND (62 aa)) form the S4 RNA-binding domain.

It belongs to the universal ribosomal protein uS4 family. Part of the 30S ribosomal subunit. Contacts protein S5. The interaction surface between S4 and S5 is involved in control of translational fidelity.

One of the primary rRNA binding proteins, it binds directly to 16S rRNA where it nucleates assembly of the body of the 30S subunit. Its function is as follows. With S5 and S12 plays an important role in translational accuracy. This chain is Small ribosomal subunit protein uS4, found in Pelobacter propionicus (strain DSM 2379 / NBRC 103807 / OttBd1).